The primary structure comprises 253 residues: 5'/3'-nucleotidase SurE (253 aa).

4 residues coordinate a divalent metal cation: Asp-8, Asp-9, Ser-39, and Asn-92.

This sequence belongs to the SurE nucleotidase family. Requires a divalent metal cation as cofactor.

It is found in the cytoplasm. It carries out the reaction a ribonucleoside 5'-phosphate + H2O = a ribonucleoside + phosphate. The enzyme catalyses a ribonucleoside 3'-phosphate + H2O = a ribonucleoside + phosphate. The catalysed reaction is [phosphate](n) + H2O = [phosphate](n-1) + phosphate + H(+). Nucleotidase with a broad substrate specificity as it can dephosphorylate various ribo- and deoxyribonucleoside 5'-monophosphates and ribonucleoside 3'-monophosphates with highest affinity to 3'-AMP. Also hydrolyzes polyphosphate (exopolyphosphatase activity) with the preference for short-chain-length substrates (P20-25). Might be involved in the regulation of dNTP and NTP pools, and in the turnover of 3'-mononucleotides produced by numerous intracellular RNases (T1, T2, and F) during the degradation of various RNAs. This chain is 5'/3'-nucleotidase SurE, found in Shigella flexneri serotype 5b (strain 8401).